Here is a 122-residue protein sequence, read N- to C-terminus: uncharacterized protein (122 aa).

The segment at 97 to 122 is disordered; it reads TSRNGFSNPNKDGKKNDDDNNSSSKS.

This is an uncharacterized protein from Mycoplasma genitalium (strain ATCC 33530 / DSM 19775 / NCTC 10195 / G37) (Mycoplasmoides genitalium).